A 418-amino-acid chain; its full sequence is AP-3 complex subunit mu-1 (418 aa).

The MHD domain occupies 176-417 (NNEAYFDVVE…VTKAGKFQVR (242 aa)).

It belongs to the adaptor complexes medium subunit family. As to quaternary structure, adaptor protein complex 3 (AP-3) is a heterotetramer composed of two large adaptins (delta-type subunit AP3D1 and beta-type subunit AP3B1 or AP3B2), a medium adaptin (mu-type subunit AP3M1 or AP3M2) and a small adaptin (sigma-type subunit APS1 or AP3S2). Interacts with AGAP1. AP-3 associates with the BLOC-1 complex. (Microbial infection) Interacts with human respiratory virus (HRSV) matrix protein; this interaction plays an essential role in trafficking the matrix protein in host cells.

It localises to the golgi apparatus. It is found in the cytoplasmic vesicle membrane. Functionally, part of the AP-3 complex, an adaptor-related complex which is not clathrin-associated. The complex is associated with the Golgi region as well as more peripheral structures. It facilitates the budding of vesicles from the Golgi membrane and may be directly involved in trafficking to lysosomes. In concert with the BLOC-1 complex, AP-3 is required to target cargos into vesicles assembled at cell bodies for delivery into neurites and nerve terminals. The chain is AP-3 complex subunit mu-1 (AP3M1) from Homo sapiens (Human).